A 215-amino-acid polypeptide reads, in one-letter code: Ribosomal RNA small subunit methyltransferase G (215 aa).

S-adenosyl-L-methionine contacts are provided by residues Gly77, Phe82, 130–131 (IE), and Arg146.

The protein belongs to the methyltransferase superfamily. RNA methyltransferase RsmG family.

The protein resides in the cytoplasm. It catalyses the reaction guanosine(527) in 16S rRNA + S-adenosyl-L-methionine = N(7)-methylguanosine(527) in 16S rRNA + S-adenosyl-L-homocysteine. Functionally, specifically methylates the N7 position of guanine in position 527 of 16S rRNA. The protein is Ribosomal RNA small subunit methyltransferase G of Bartonella bacilliformis (strain ATCC 35685 / KC583 / Herrer 020/F12,63).